The primary structure comprises 817 residues: Neurabin-2 (817 aa).

Disordered regions lie at residues 1 to 52 (MMKT…KYGS) and 64 to 163 (MGTT…GGDK). Actin-binding stretches follow at residues 1–154 (MMKT…FERS) and 164–282 (EAVA…QHRV). The residue at position 15 (serine 15) is a Phosphoserine; by MAPK1. Serine 17 is subject to Phosphoserine; by CDK5. Position 94 is a phosphoserine; by PKA (serine 94). Residues serine 100 and serine 116 each carry the phosphoserine modification. Positions 100-371 (SLNENVDHSA…LERGVDNGRA (272 aa)) are interaction with D(2) dopamine receptor. Residues 131 to 141 (SAQPAPPPHPP) are compositionally biased toward pro residues. The segment at 169-255 (RLLRQERAGL…KRSRVFQPPP (87 aa)) is interaction with ADRA2A, ADRA2B and ADRA2C. Serine 192 bears the Phosphoserine mark. Position 193 is a phosphothreonine (threonine 193). Residue serine 205 is modified to Phosphoserine; by MAPK1. Phosphothreonine is present on threonine 207. Residues 216 to 451 (EKADSRTGLH…DPAPSRKIHF (236 aa)) form a disordered region. Over residues 290 to 301 (KPREVRKIKPVE) the composition is skewed to basic and acidic residues. 2 stretches are compositionally biased toward low complexity: residues 332–341 (STPATTASPA) and 399–409 (SGLGEDSGGSA). The span at 410–425 (LEEDDEEDEEDGEPPY) shows a compositional bias: acidic residues. Residues 417-494 (DEEDGEPPYE…LEKRVERLEL (78 aa)) form an interaction with protein phosphatase 1 region. A Phosphoserine modification is found at serine 438. The PP1-binding motif signature appears at 447-451 (RKIHF). The interval 480 to 525 (SAEYELEKRVERLELFPVELEKDSEGLGISIIGMGAGADMGLEKLG) is interaction with RGS2. Residues 496-584 (PVELEKDSEG…RVRFMIGRER (89 aa)) form the PDZ domain. Residues 595-616 (IQQTLEQERWQREMMEQRYAQY) are a coiled coil. Residues 595–816 (IQQTLEQERW…NLQTLRNSNS (222 aa)) form an interaction with TGN38 region. Phosphoserine is present on serine 658. Positions 665 to 816 (EKLVHKFKEL…NLQTLRNSNS (152 aa)) form a coiled coil.

In terms of assembly, possibly exists as a homodimer, homotrimer or a homotetramer. Interacts with F-actin, PPP1CA, neurabin-1, TGN38 and D(2) dopamine receptor. Interacts with RGS1, RGS2, RGS4, RGS19 and ADRA1B, ADRA2A, ADRA2B, ADRA2C, CDKN2A, PPP1R2, RASGFR1 and TIAM1. Interacts (via C-terminus) with SPATA13 (via C-terminal tail). Interacts with DCLK2. Interacts with ADRA2B. Post-translationally, stimulation of D1 (but not D2) dopamine receptors induces Ser-94 phosphorylation. Dephosphorylation of Ser-94 is mediated mainly by PP1 and to a lesser extent by PP2A. Phosphorylation of spinophilin disrupts its association with F-actin, but does not affect its binding to PP1.

The protein resides in the cytoplasm. Its subcellular location is the cytoskeleton. It localises to the nucleus. The protein localises to the postsynaptic density. It is found in the cell junction. The protein resides in the adherens junction. Its subcellular location is the cell projection. It localises to the dendritic spine. The protein localises to the cell membrane. It is found in the lamellipodium. The protein resides in the filopodium. Its subcellular location is the ruffle membrane. Seems to act as a scaffold protein in multiple signaling pathways. Modulates excitatory synaptic transmission and dendritic spine morphology. Binds to actin filaments (F-actin) and shows cross-linking activity. Binds along the sides of the F-actin. May play an important role in linking the actin cytoskeleton to the plasma membrane at the synaptic junction. Believed to target protein phosphatase 1/PP1 to dendritic spines, which are rich in F-actin, and regulates its specificity toward ion channels and other substrates, such as AMPA-type and NMDA-type glutamate receptors. Plays a role in regulation of G-protein coupled receptor signaling, including dopamine D2 receptors and alpha-adrenergic receptors. May establish a signaling complex for dopaminergic neurotransmission through D2 receptors by linking receptors downstream signaling molecules and the actin cytoskeleton. Binds to ADRA1B and RGS2 and mediates regulation of ADRA1B signaling. May confer to Rac signaling specificity by binding to both, RacGEFs and Rac effector proteins. Probably regulates p70 S6 kinase activity by forming a complex with TIAM1. Required for hepatocyte growth factor (HGF)-induced cell migration. The sequence is that of Neurabin-2 (Ppp1r9b) from Mus musculus (Mouse).